The chain runs to 452 residues: Pup--protein ligase (452 aa).

Glutamate 9 contacts Mg(2+). ATP is bound at residue arginine 53. Position 55 (tyrosine 55) interacts with Mg(2+). Aspartate 57 serves as the catalytic Proton acceptor. Position 63 (glutamate 63) interacts with Mg(2+). Residues threonine 66 and tryptophan 419 each coordinate ATP.

This sequence belongs to the Pup ligase/Pup deamidase family. Pup-conjugating enzyme subfamily.

It carries out the reaction ATP + [prokaryotic ubiquitin-like protein]-L-glutamate + [protein]-L-lysine = ADP + phosphate + N(6)-([prokaryotic ubiquitin-like protein]-gamma-L-glutamyl)-[protein]-L-lysine.. Its pathway is protein degradation; proteasomal Pup-dependent pathway. It participates in protein modification; protein pupylation. Catalyzes the covalent attachment of the prokaryotic ubiquitin-like protein modifier Pup to the proteasomal substrate proteins, thereby targeting them for proteasomal degradation. This tagging system is termed pupylation. The ligation reaction involves the side-chain carboxylate of the C-terminal glutamate of Pup and the side-chain amino group of a substrate lysine. This chain is Pup--protein ligase, found in Nakamurella multipartita (strain ATCC 700099 / DSM 44233 / CIP 104796 / JCM 9543 / NBRC 105858 / Y-104) (Microsphaera multipartita).